A 348-amino-acid chain; its full sequence is Aldose 1-epimerase (348 aa).

Position 80 (arginine 80) interacts with substrate. Residue histidine 180 is the Proton donor of the active site. Aspartate 243 contributes to the substrate binding site. Glutamate 311 acts as the Proton acceptor in catalysis.

This sequence belongs to the aldose epimerase family.

It carries out the reaction alpha-D-glucose = beta-D-glucose. It functions in the pathway carbohydrate metabolism; hexose metabolism. Functionally, mutarotase converts alpha-aldose to the beta-anomer. It is active on D-glucose, L-arabinose, D-xylose, D-galactose, maltose and lactose. The sequence is that of Aldose 1-epimerase (galM) from Streptococcus thermophilus.